The chain runs to 328 residues: Protease HtpX homolog (328 aa).

The next 2 membrane-spanning stretches (helical) occupy residues 6–26 and 28–48; these read TAML…LIGG and SGMM…YWNS. Zn(2+) is bound at residue H130. The active site involves E131. Residue H134 participates in Zn(2+) binding. Transmembrane regions (helical) follow at residues 145–165 and 172–192; these read ITAT…FFGG and PLGA…AMLV. E201 contacts Zn(2+). A disordered region spans residues 279 to 328; sequence QYGGGTGPSVGTPTRSGSTGPAMTANPERKSRSVPNTGRGGSQPPKGPWS. Residues 287–299 are compositionally biased toward low complexity; it reads SVGTPTRSGSTGP.

This sequence belongs to the peptidase M48B family. It depends on Zn(2+) as a cofactor.

Its subcellular location is the cell inner membrane. In Rhizobium rhizogenes (strain K84 / ATCC BAA-868) (Agrobacterium radiobacter), this protein is Protease HtpX homolog.